The following is a 140-amino-acid chain: Low calcium response locus protein T (140 aa).

The polypeptide is Low calcium response locus protein T (lcrT) (Yersinia pseudotuberculosis serotype I (strain IP32953)).